A 48-amino-acid chain; its full sequence is ATP synthase protein 8 (48 aa).

The chain crosses the membrane as a helical span at residues 16-36; it reads GFLLMTILLVLFSQFFLPMIL.

This sequence belongs to the ATPase protein 8 family. In terms of assembly, F-type ATPases have 2 components, CF(1) - the catalytic core - and CF(0) - the membrane proton channel.

The protein resides in the mitochondrion membrane. Mitochondrial membrane ATP synthase (F(1)F(0) ATP synthase or Complex V) produces ATP from ADP in the presence of a proton gradient across the membrane which is generated by electron transport complexes of the respiratory chain. F-type ATPases consist of two structural domains, F(1) - containing the extramembraneous catalytic core and F(0) - containing the membrane proton channel, linked together by a central stalk and a peripheral stalk. During catalysis, ATP synthesis in the catalytic domain of F(1) is coupled via a rotary mechanism of the central stalk subunits to proton translocation. Part of the complex F(0) domain. Minor subunit located with subunit a in the membrane. The protein is ATP synthase protein 8 (ATP8) of Vanderwaltozyma polyspora (strain ATCC 22028 / DSM 70294 / BCRC 21397 / CBS 2163 / NBRC 10782 / NRRL Y-8283 / UCD 57-17) (Kluyveromyces polysporus).